We begin with the raw amino-acid sequence, 435 residues long: Serine--tRNA ligase (435 aa).

242-244 contributes to the L-serine binding site; sequence TAE. Residue 273 to 275 coordinates ATP; sequence RSE. Residue Glu-296 coordinates L-serine. 360-363 contributes to the ATP binding site; it reads EISS. Ser-396 serves as a coordination point for L-serine.

It belongs to the class-II aminoacyl-tRNA synthetase family. Type-1 seryl-tRNA synthetase subfamily. As to quaternary structure, homodimer. The tRNA molecule binds across the dimer.

Its subcellular location is the cytoplasm. The enzyme catalyses tRNA(Ser) + L-serine + ATP = L-seryl-tRNA(Ser) + AMP + diphosphate + H(+). It catalyses the reaction tRNA(Sec) + L-serine + ATP = L-seryl-tRNA(Sec) + AMP + diphosphate + H(+). It participates in aminoacyl-tRNA biosynthesis; selenocysteinyl-tRNA(Sec) biosynthesis; L-seryl-tRNA(Sec) from L-serine and tRNA(Sec): step 1/1. Its function is as follows. Catalyzes the attachment of serine to tRNA(Ser). Is also able to aminoacylate tRNA(Sec) with serine, to form the misacylated tRNA L-seryl-tRNA(Sec), which will be further converted into selenocysteinyl-tRNA(Sec). The polypeptide is Serine--tRNA ligase (Vibrio campbellii (strain ATCC BAA-1116)).